The sequence spans 243 residues: Urease accessory protein UreF (243 aa).

The protein belongs to the UreF family. As to quaternary structure, ureD, UreF and UreG form a complex that acts as a GTP-hydrolysis-dependent molecular chaperone, activating the urease apoprotein by helping to assemble the nickel containing metallocenter of UreC. The UreE protein probably delivers the nickel.

It is found in the cytoplasm. In terms of biological role, required for maturation of urease via the functional incorporation of the urease nickel metallocenter. The polypeptide is Urease accessory protein UreF (Rhodopseudomonas palustris (strain BisB5)).